We begin with the raw amino-acid sequence, 290 residues long: Small ribosomal subunit biogenesis GTPase RsgA (290 aa).

The 158-residue stretch at 61–218 (KSELVRPTVA…IVDTPGFSTL (158 aa)) folds into the CP-type G domain. GTP contacts are provided by residues 110 to 113 (NKID) and 161 to 169 (GPSGAGKST). Positions 243, 248, 250, and 256 each coordinate Zn(2+).

Belongs to the TRAFAC class YlqF/YawG GTPase family. RsgA subfamily. In terms of assembly, monomer. Associates with 30S ribosomal subunit, binds 16S rRNA. Zn(2+) serves as cofactor.

The protein localises to the cytoplasm. In terms of biological role, one of several proteins that assist in the late maturation steps of the functional core of the 30S ribosomal subunit. Helps release RbfA from mature subunits. May play a role in the assembly of ribosomal proteins into the subunit. Circularly permuted GTPase that catalyzes slow GTP hydrolysis, GTPase activity is stimulated by the 30S ribosomal subunit. In Clostridium beijerinckii (strain ATCC 51743 / NCIMB 8052) (Clostridium acetobutylicum), this protein is Small ribosomal subunit biogenesis GTPase RsgA.